A 181-amino-acid polypeptide reads, in one-letter code: Cytochrome b6-f complex iron-sulfur subunit (181 aa).

The disordered stretch occupies residues 1 to 35; the sequence is MAQTGNFKSPARMSSLGQGAAPASAGAVTGGKPRE. A run of 2 helical transmembrane segments spans residues 53–73 and 114–134; these read VGGVGAVVAVSTLYPVVRYIV and GGSLTAVSAICTHLGCLVHWD. Positions 85-178 constitute a Rieske domain; sequence LAVGPASDVP…VKIEDGKIVV (94 aa). [2Fe-2S] cluster-binding residues include Cys-124, His-126, Cys-142, and His-145. Cys-129 and Cys-144 form a disulfide bridge.

The protein belongs to the Rieske iron-sulfur protein family. It depends on [2Fe-2S] cluster as a cofactor.

The protein resides in the cell inner membrane. The enzyme catalyses 2 oxidized [plastocyanin] + a plastoquinol + 2 H(+)(in) = 2 reduced [plastocyanin] + a plastoquinone + 4 H(+)(out). In terms of biological role, component of the green S-bacteria bc-complex which consists of the Rieske protein and cytochrome b subunit and which appears to lack a cytochrome c1-equivalent. This complex has a comparatively low redox potential. In Chlorobaculum tepidum (strain ATCC 49652 / DSM 12025 / NBRC 103806 / TLS) (Chlorobium tepidum), this protein is Cytochrome b6-f complex iron-sulfur subunit (petC).